The chain runs to 219 residues: N-(5'-phosphoribosyl)anthranilate isomerase (219 aa).

This sequence belongs to the TrpF family.

The enzyme catalyses N-(5-phospho-beta-D-ribosyl)anthranilate = 1-(2-carboxyphenylamino)-1-deoxy-D-ribulose 5-phosphate. It participates in amino-acid biosynthesis; L-tryptophan biosynthesis; L-tryptophan from chorismate: step 3/5. This Dehalococcoides mccartyi (strain ATCC BAA-2266 / KCTC 15142 / 195) (Dehalococcoides ethenogenes (strain 195)) protein is N-(5'-phosphoribosyl)anthranilate isomerase.